The chain runs to 58 residues: Lantibiotic macedovicin (58 aa).

The propeptide occupies 1-25 (MMNATENQIFVETVSDQELEMLIGG). 2,3-didehydrobutyrine occurs at positions 33 and 35. 2 consecutive cross-links (beta-methyllanthionine (Thr-Cys)) follow at residues 33–38 (TLTKDC) and 35–57 (TKDC…CKNC). Cys-46 and Cys-54 form a disulfide bridge.

In terms of processing, maturation of macedovicin involves the enzymatic dehydration of Thr-33 and Thr-35 into dehydrobutyrine residues, that can form a beta-methyllanthionine bond with Cys-38 and Cys-57, respectively. This is followed by membrane translocation and cleavage of the modified precursor.

Its subcellular location is the secreted. Lanthionine-containing peptide antibiotic (lantibiotic) active on Gram-positive bacteria. Macedovicin inhibits a broad spectrum of lactic acid bacteria, several food spoilage species (e.g. Clostridium spp.) and oral streptococci. The bactericidal activity of lantibiotics is based on depolarization of energized bacterial cytoplasmic membranes, initiated by the formation of aqueous transmembrane pores. In Streptococcus macedonicus (strain ACA-DC 198), this protein is Lantibiotic macedovicin.